The sequence spans 63 residues: Small ribosomal subunit protein eS17 (63 aa).

Belongs to the eukaryotic ribosomal protein eS17 family.

The protein is Small ribosomal subunit protein eS17 of Methanococcus aeolicus (strain ATCC BAA-1280 / DSM 17508 / OCM 812 / Nankai-3).